Consider the following 691-residue polypeptide: ERI1 exoribonuclease 2 (691 aa).

The region spanning 37–226 (LIVIDFESTC…DDSRNTALLA (190 aa)) is the Exonuclease domain. Mg(2+)-binding residues include aspartate 41, glutamate 43, and aspartate 156. The active-site Proton acceptor is the glutamate 43. Glutamate 43 contacts AMP. Residue histidine 213 is the Proton acceptor of the active site. Histidine 213 provides a ligand contact to AMP. Aspartate 218 is a binding site for Mg(2+). Positions 597, 599, 622, and 634 each coordinate Zn(2+). The GRF-type zinc-finger motif lies at 597–643 (CKCGRRSKRLVVSNNGPNHGKVFYCCPIGKYQENRKCCGYFKWEQTL).

Belongs to the ERI2 family. The cofactor is Mg(2+).

The protein is ERI1 exoribonuclease 2 (ERI2) of Homo sapiens (Human).